The chain runs to 507 residues: MTLAVMLQGTASDVGKSVLVAGLCRIFHQDGLRTAPFKSQNMALNSGITPDGKEMGRAQIFQAEAAGIAPDVRMNPILLKPTSDRQAQVVLMGQVATSMDAVSYHQYKPRLREQILAVYQSLAGEYEALVLEGAGSPAEINLRDRDIVNMGMAEMAQCPVILVADIDRGGVFAAIYGTLALLQPQERARVKGVIINKFRGDVALLRSGIEQIEALTGVPVLGVMPWLDVDLEDEDGVALQAGKYHRTDRRDIDIAVVHLPHIANFTDFNALAAQPDVRVRYVRDPQALADADLVILPGSKNTLGDLCWLRESGMAHAVEQARQRKVPLLGICGGYQMLGETIIDEVESGLGTQPGLGVLKTVTHFAQHKTTTQVQATLGTNLPEWLADAAGLHVSGYEIHMGETRREAGSPPLLQLHKAGQSVEDGAISDDGLAFGTYLHGLFDSDAFTRALLNGLRQRKGLAPLDSALEYARYKTRQFDRLADAMREHIAIDKIYAIMRQHQEPLC.

Positions aspartate 251–phenylalanine 448 constitute a GATase cobBQ-type domain. The Nucleophile role is filled by cysteine 332. The active site involves histidine 440.

Belongs to the CobB/CobQ family. CobQ subfamily.

The protein operates within cofactor biosynthesis; adenosylcobalamin biosynthesis. Catalyzes amidations at positions B, D, E, and G on adenosylcobyrinic A,C-diamide. NH(2) groups are provided by glutamine, and one molecule of ATP is hydrogenolyzed for each amidation. This Klebsiella pneumoniae (strain 342) protein is Cobyric acid synthase.